Consider the following 185-residue polypeptide: Ribosome-recycling factor (185 aa).

It belongs to the RRF family.

It is found in the cytoplasm. In terms of biological role, responsible for the release of ribosomes from messenger RNA at the termination of protein biosynthesis. May increase the efficiency of translation by recycling ribosomes from one round of translation to another. The polypeptide is Ribosome-recycling factor (Pseudomonas syringae pv. tomato (strain ATCC BAA-871 / DC3000)).